We begin with the raw amino-acid sequence, 305 residues long: UDP-3-O-acyl-N-acetylglucosamine deacetylase (305 aa).

The Zn(2+) site is built by His79, His238, and Asp242. The Proton donor role is filled by His265.

It belongs to the LpxC family. It depends on Zn(2+) as a cofactor.

It catalyses the reaction a UDP-3-O-[(3R)-3-hydroxyacyl]-N-acetyl-alpha-D-glucosamine + H2O = a UDP-3-O-[(3R)-3-hydroxyacyl]-alpha-D-glucosamine + acetate. Its pathway is glycolipid biosynthesis; lipid IV(A) biosynthesis; lipid IV(A) from (3R)-3-hydroxytetradecanoyl-[acyl-carrier-protein] and UDP-N-acetyl-alpha-D-glucosamine: step 2/6. Catalyzes the hydrolysis of UDP-3-O-myristoyl-N-acetylglucosamine to form UDP-3-O-myristoylglucosamine and acetate, the committed step in lipid A biosynthesis. This is UDP-3-O-acyl-N-acetylglucosamine deacetylase from Shigella dysenteriae serotype 1 (strain Sd197).